The following is a 189-amino-acid chain: MTDTLNRRAAMALGLASAAGAALATPALSQDAAPATVRNNVSGFQMHAWRDHFDSLGKPMLVADTFSRALHYWNAEGGDHRIFPTSVPISDDLTKRGYTEIVRKKEGPSWTPTPSQMARYPDWKPIGPGPDNPLGTHAMYLSWPAYIIHGTHDTRKIGRRSSDGCIGLYNEMIAELFQLCPVGTRVRVI.

A signal peptide (tat-type signal) is located at residues 1–35 (MTDTLNRRAAMALGLASAAGAALATPALSQDAAPA). The L,D-TPase catalytic domain maps to 59 to 189 (PMLVADTFSR…CPVGTRVRVI (131 aa)). The active-site Proton donor/acceptor is the histidine 149. The active-site Nucleophile is cysteine 165.

This sequence belongs to the YkuD family. Post-translationally, predicted to be exported by the Tat system. The position of the signal peptide cleavage has not been experimentally proven.

The protein operates within cell wall biogenesis; peptidoglycan biosynthesis. The sequence is that of Putative L,D-transpeptidase in ATP synthase subunits region ORF 5 from Fuscovulum blasticum (Rhodobacter blasticus).